We begin with the raw amino-acid sequence, 374 residues long: tRNA-specific 2-thiouridylase MnmA (374 aa).

Residues 13 to 20 (GMSGGVDS) and Met-39 contribute to the ATP site. Residues 99-101 (NPD) are interaction with target base in tRNA. Cys-104 serves as the catalytic Nucleophile. An intrachain disulfide couples Cys-104 to Cys-201. Gly-128 provides a ligand contact to ATP. Residues 151-153 (KDQ) form an interaction with tRNA region. Cys-201 acts as the Cysteine persulfide intermediate in catalysis. The segment at 313–314 (RY) is interaction with tRNA.

Belongs to the MnmA/TRMU family.

It localises to the cytoplasm. It carries out the reaction S-sulfanyl-L-cysteinyl-[protein] + uridine(34) in tRNA + AH2 + ATP = 2-thiouridine(34) in tRNA + L-cysteinyl-[protein] + A + AMP + diphosphate + H(+). Functionally, catalyzes the 2-thiolation of uridine at the wobble position (U34) of tRNA, leading to the formation of s(2)U34. This is tRNA-specific 2-thiouridylase MnmA from Streptococcus equi subsp. equi (strain 4047).